The chain runs to 166 residues: MSKVIETKQQVVTEIADKLRASKSTIVVDYRGLTVSEATELRKQLREAGVEFKVYKNSLTRRAAESAEMAELNEFLTGPNAIAFSNEDVVAPAKVLNDFAKDHEALEIKAGVIEGKLVTLDEVKAIATLPSREGLLSMLLSVLQAPIRNLALATKAVADQKEEQGA.

Belongs to the universal ribosomal protein uL10 family. Part of the ribosomal stalk of the 50S ribosomal subunit. The N-terminus interacts with L11 and the large rRNA to form the base of the stalk. The C-terminus forms an elongated spine to which L12 dimers bind in a sequential fashion forming a multimeric L10(L12)X complex.

In terms of biological role, forms part of the ribosomal stalk, playing a central role in the interaction of the ribosome with GTP-bound translation factors. The sequence is that of Large ribosomal subunit protein uL10 from Bacillus cereus (strain 03BB102).